The sequence spans 687 residues: Glycine--tRNA ligase beta subunit (687 aa).

This sequence belongs to the class-II aminoacyl-tRNA synthetase family. As to quaternary structure, tetramer of two alpha and two beta subunits.

It is found in the cytoplasm. The catalysed reaction is tRNA(Gly) + glycine + ATP = glycyl-tRNA(Gly) + AMP + diphosphate. The sequence is that of Glycine--tRNA ligase beta subunit from Citrifermentans bemidjiense (strain ATCC BAA-1014 / DSM 16622 / JCM 12645 / Bem) (Geobacter bemidjiensis).